The chain runs to 502 residues: Glycerol kinase (502 aa).

Residue threonine 14 participates in ADP binding. The ATP site is built by threonine 14, threonine 15, and serine 16. Threonine 14 is a sn-glycerol 3-phosphate binding site. ADP is bound at residue arginine 18. Residues arginine 84, glutamate 85, tyrosine 137, and aspartate 247 each contribute to the sn-glycerol 3-phosphate site. Glycerol contacts are provided by arginine 84, glutamate 85, tyrosine 137, aspartate 247, and glutamine 248. ADP is bound by residues threonine 269 and glycine 312. ATP contacts are provided by threonine 269, glycine 312, glutamine 316, and glycine 413. ADP is bound by residues glycine 413 and asparagine 417.

It belongs to the FGGY kinase family. Homotetramer and homodimer (in equilibrium). Heterodimer with EIIA-Glc. Binds 1 zinc ion per glycerol kinase EIIA-Glc dimer. The zinc ion is important for dimerization.

The enzyme catalyses glycerol + ATP = sn-glycerol 3-phosphate + ADP + H(+). It functions in the pathway polyol metabolism; glycerol degradation via glycerol kinase pathway; sn-glycerol 3-phosphate from glycerol: step 1/1. Its activity is regulated as follows. Activity of this regulatory enzyme is affected by several metabolites. Allosterically and non-competitively inhibited by fructose 1,6-bisphosphate (FBP) and unphosphorylated phosphocarrier protein EIIA-Glc (III-Glc), an integral component of the bacterial phosphotransferase (PTS) system. Key enzyme in the regulation of glycerol uptake and metabolism. Catalyzes the phosphorylation of glycerol to yield sn-glycerol 3-phosphate. This Photorhabdus laumondii subsp. laumondii (strain DSM 15139 / CIP 105565 / TT01) (Photorhabdus luminescens subsp. laumondii) protein is Glycerol kinase.